A 505-amino-acid polypeptide reads, in one-letter code: Cyclin-dependent kinase C-1 (505 aa).

Positions 26-325 (FEKLEQIGEG…AKDALDAEYF (300 aa)) constitute a Protein kinase domain. Residues 32–40 (IGEGTYGQV) and K55 contribute to the ATP site. At Y37 the chain carries Phosphotyrosine. D164 functions as the Proton acceptor in the catalytic mechanism. Position 198 is a phosphothreonine (T198). Positions 336–505 (SLPTYESSHE…QRNQQYGWQQ (170 aa)) are disordered. A compositionally biased stretch (low complexity) spans 429–456 (PPSGNQSGGYNQSRGGYSSGSYPPQGRG). Over residues 482–491 (GQYGGSGSSG) the composition is skewed to gly residues. Over residues 492–505 (RGQNQRNQQYGWQQ) the composition is skewed to low complexity.

It belongs to the protein kinase superfamily. CMGC Ser/Thr protein kinase family. CDC2/CDKX subfamily. Interacts with CYCT1-3. Highly expressed in flowers. Expressed in seedlings, roots, rosettes and stems.

It carries out the reaction L-seryl-[protein] + ATP = O-phospho-L-seryl-[protein] + ADP + H(+). The enzyme catalyses L-threonyl-[protein] + ATP = O-phospho-L-threonyl-[protein] + ADP + H(+). It catalyses the reaction [DNA-directed RNA polymerase] + ATP = phospho-[DNA-directed RNA polymerase] + ADP + H(+). This chain is Cyclin-dependent kinase C-1 (CDKC-1), found in Arabidopsis thaliana (Mouse-ear cress).